The following is a 212-amino-acid chain: Adenylate kinase (212 aa).

10–15 contributes to the ATP binding site; the sequence is GAGKGT. The segment at 30–59 is NMP; that stretch reads AIGDIFRTIIKTSTSEAELINNYVKQGELI. AMP contacts are provided by residues Arg36, 57 to 59, 85 to 88, and Gln92; these read ELI and GYPR. Residues 122–160 are LID; the sequence is GRYSCKNCGKIYNRYFVQPKTDNVCDVCGSSTFDYRKDD. Arg123 contacts ATP. Zn(2+) is bound by residues Cys126 and Cys129. 132–133 provides a ligand contact to ATP; the sequence is IY. Residues Cys146 and Cys149 each contribute to the Zn(2+) site. Residues Arg157 and Arg168 each contribute to the AMP site. Lys196 provides a ligand contact to ATP.

It belongs to the adenylate kinase family. As to quaternary structure, monomer.

The protein resides in the cytoplasm. The catalysed reaction is AMP + ATP = 2 ADP. Its pathway is purine metabolism; AMP biosynthesis via salvage pathway; AMP from ADP: step 1/1. Catalyzes the reversible transfer of the terminal phosphate group between ATP and AMP. Plays an important role in cellular energy homeostasis and in adenine nucleotide metabolism. The polypeptide is Adenylate kinase (Rickettsia conorii (strain ATCC VR-613 / Malish 7)).